Here is a 261-residue protein sequence, read N- to C-terminus: NAD-capped RNA hydrolase NudC (261 aa).

R69 is a substrate binding site. Residues C98 and C101 each contribute to the Zn(2+) site. E111 contacts substrate. Zn(2+) contacts are provided by C116 and C119. Y124 is a substrate binding site. Positions 125–248 (PQIAPCIIVA…TVARRLIEDT (124 aa)) constitute a Nudix hydrolase domain. Residues A158, E174, and E178 each coordinate a divalent metal cation. Positions 159 to 180 (GFVEVGETLEQTVAREVMEESS) match the Nudix box motif. 192–199 (QPWPFPQS) contacts substrate. An a divalent metal cation-binding site is contributed by E219. A241 contacts substrate.

It belongs to the Nudix hydrolase family. NudC subfamily. As to quaternary structure, homodimer. It depends on Mg(2+) as a cofactor. Requires Mn(2+) as cofactor. The cofactor is Zn(2+).

It carries out the reaction a 5'-end NAD(+)-phospho-ribonucleoside in mRNA + H2O = a 5'-end phospho-adenosine-phospho-ribonucleoside in mRNA + beta-nicotinamide D-ribonucleotide + 2 H(+). The catalysed reaction is NAD(+) + H2O = beta-nicotinamide D-ribonucleotide + AMP + 2 H(+). The enzyme catalyses NADH + H2O = reduced beta-nicotinamide D-ribonucleotide + AMP + 2 H(+). In terms of biological role, mRNA decapping enzyme that specifically removes the nicotinamide adenine dinucleotide (NAD) cap from a subset of mRNAs by hydrolyzing the diphosphate linkage to produce nicotinamide mononucleotide (NMN) and 5' monophosphate mRNA. The NAD-cap is present at the 5'-end of some mRNAs and stabilizes RNA against 5'-processing. Has preference for mRNAs with a 5'-end purine. Catalyzes the hydrolysis of a broad range of dinucleotide pyrophosphates. The protein is NAD-capped RNA hydrolase NudC of Erwinia tasmaniensis (strain DSM 17950 / CFBP 7177 / CIP 109463 / NCPPB 4357 / Et1/99).